The following is a 177-amino-acid chain: ATP-dependent protease subunit HslV (177 aa).

Threonine 5 is an active-site residue. 3 residues coordinate Na(+): glycine 161, cysteine 164, and threonine 167.

The protein belongs to the peptidase T1B family. HslV subfamily. In terms of assembly, a double ring-shaped homohexamer of HslV is capped on each side by a ring-shaped HslU homohexamer. The assembly of the HslU/HslV complex is dependent on binding of ATP.

It is found in the cytoplasm. It carries out the reaction ATP-dependent cleavage of peptide bonds with broad specificity.. Its activity is regulated as follows. Allosterically activated by HslU binding. Functionally, protease subunit of a proteasome-like degradation complex believed to be a general protein degrading machinery. In Campylobacter concisus (strain 13826), this protein is ATP-dependent protease subunit HslV.